The chain runs to 135 residues: ATP synthase epsilon chain (135 aa).

The interval 91–122 (EAQKQLSEAEQAWSKFDGQPNSPDKIKAQQAF) is disordered.

This sequence belongs to the ATPase epsilon chain family. In terms of assembly, F-type ATPases have 2 components, CF(1) - the catalytic core - and CF(0) - the membrane proton channel. CF(1) has five subunits: alpha(3), beta(3), gamma(1), delta(1), epsilon(1). CF(0) has three main subunits: a, b and c.

It is found in the cellular thylakoid membrane. Produces ATP from ADP in the presence of a proton gradient across the membrane. The polypeptide is ATP synthase epsilon chain (Synechococcus sp. (strain RCC307)).